Here is a 207-residue protein sequence, read N- to C-terminus: Large ribosomal subunit protein uL4 (207 aa).

Over residues 44-58 (RAPTRATRERSDVAR) the composition is skewed to basic and acidic residues. Positions 44–82 (RAPTRATRERSDVARSGKKFGRQKGGGTARHGDRRSPIF) are disordered.

It belongs to the universal ribosomal protein uL4 family. In terms of assembly, part of the 50S ribosomal subunit.

Its function is as follows. One of the primary rRNA binding proteins, this protein initially binds near the 5'-end of the 23S rRNA. It is important during the early stages of 50S assembly. It makes multiple contacts with different domains of the 23S rRNA in the assembled 50S subunit and ribosome. Functionally, forms part of the polypeptide exit tunnel. This is Large ribosomal subunit protein uL4 from Zymomonas mobilis subsp. mobilis (strain ATCC 31821 / ZM4 / CP4).